The sequence spans 750 residues: Sulfhydryl oxidase 1 (750 aa).

An N-terminal signal peptide occupies residues 1–32 (MRRCGRHSGPPSLLLLLLLLPPLLLSVPGAYA). In terms of domain architecture, Thioredoxin spans 33–159 (ARLSVLYSSS…RMRLIDALES (127 aa)). Active-site nucleophile residues include C73 and C76. Intrachain disulfides connect C73–C76 and C104–C113. N-linked (GlcNAc...) asparagine glycosylation is found at N133 and N246. C396 and C408 are joined by a disulfide. One can recognise an ERV/ALR sulfhydryl oxidase domain in the interval 399-506 (SEPHFRGFPC…EDPQFPKVQW (108 aa)). FAD-binding positions include R404, W411, H415, D454, H458, 481–488 (WTSHNRVN), K503, and W506. C452 and C455 are joined by a disulfide. C512 and C515 are disulfide-bonded. 2 disordered regions span residues 545–567 (VRDPPAPGPASRRGTQDPEASPN) and 585–632 (EQAA…PEHT). Residues 587 to 597 (AASAASPGATA) show a composition bias toward low complexity. A helical membrane pass occupies residues 710–730 (FLDISLCVGLYSVSFMGLLAM).

This sequence belongs to the quiescin-sulfhydryl oxidase (QSOX) family. As to quaternary structure, monomer. FAD is required as a cofactor. Post-translationally, N-glycosylated. O-glycosylated on Thr and Ser residues. In terms of tissue distribution, isoform 3: Detected in seminal vesicle fluid (at protein level). Isoform 1: Detected in brain, hypophysis, heart, testis and the seminal vesicle. Isoform 3: Highly expressed in the seminal vesicles followed by testis, heart, brain, thymus, hypophysis and lung. Also expressed in prostate, kidney, spleen, liver.

The protein localises to the golgi apparatus membrane. It localises to the secreted. It carries out the reaction 2 R'C(R)SH + O2 = R'C(R)S-S(R)CR' + H2O2. Catalyzes the oxidation of sulfhydryl groups in peptide and protein thiols to disulfides with the reduction of oxygen to hydrogen peroxide. Plays a role in disulfide bond formation in a variety of extracellular proteins. In fibroblasts, required for normal incorporation of laminin into the extracellular matrix, and thereby for normal cell-cell adhesion and cell migration. The polypeptide is Sulfhydryl oxidase 1 (Qsox1) (Rattus norvegicus (Rat)).